A 369-amino-acid chain; its full sequence is MSQSDYYEVLGVGRDADENELKKAYRKLAMKYHPDRNAGDTKAEERFKNIKEAYEILSDPNKRAAYDQFGHAGLNGGMGGAGAQGFSDAFSDIFSDLFGMRGGGRSSVHRGADLRYNLEITLEQAARGAETQIRIPRQEVCDTCHGSGAKPGTSPKTCPTCNGHGQIRMQQGFFSIQQTCSHCQGSGKVVSDPCGDCHGAGWVKRQKTLSVRIPAGVDEGDSIRLTGEGEAGANGGQAGDLYIVIHLASHPVFQREGNHLHCEIPISFTVAALGGEIEVPTLDGHARIKVPAGTQTGKIFRLRSKGITGVRNQSTGDLLCHVAVETPVDLTARQKELLEEFESISQKDGSRHHPRAKSWMEKAREFFAE.

The region spanning 5–70 is the J domain; it reads DYYEVLGVGR…NKRAAYDQFG (66 aa). Residues 128-206 form a CR-type zinc finger; that stretch reads GAETQIRIPR…CHGAGWVKRQ (79 aa). Zn(2+)-binding residues include cysteine 141, cysteine 144, cysteine 158, cysteine 161, cysteine 180, cysteine 183, cysteine 194, and cysteine 197. CXXCXGXG motif repeat units follow at residues 141–148, 158–165, 180–187, and 194–201; these read CDTCHGSG, CPTCNGHG, CSHCQGSG, and CGDCHGAG.

Belongs to the DnaJ family. Homodimer. Zn(2+) is required as a cofactor.

Its subcellular location is the cytoplasm. Participates actively in the response to hyperosmotic and heat shock by preventing the aggregation of stress-denatured proteins and by disaggregating proteins, also in an autonomous, DnaK-independent fashion. Unfolded proteins bind initially to DnaJ; upon interaction with the DnaJ-bound protein, DnaK hydrolyzes its bound ATP, resulting in the formation of a stable complex. GrpE releases ADP from DnaK; ATP binding to DnaK triggers the release of the substrate protein, thus completing the reaction cycle. Several rounds of ATP-dependent interactions between DnaJ, DnaK and GrpE are required for fully efficient folding. Also involved, together with DnaK and GrpE, in the DNA replication of plasmids through activation of initiation proteins. The polypeptide is Chaperone protein DnaJ (Nitrosomonas europaea (strain ATCC 19718 / CIP 103999 / KCTC 2705 / NBRC 14298)).